A 114-amino-acid polypeptide reads, in one-letter code: Immunoglobulin kappa variable 6D-21 (114 aa).

The signal sequence occupies residues 1–19; that stretch reads MSPSQLIGFLLLWVPASRG. Positions 20 to 42 are framework-1; the sequence is EIVLTQSPDFQSVTPKEKVTITC. In terms of domain architecture, Ig-like spans 20-114; sequence EIVLTQSPDF…YYCHQSSSLP (95 aa). A disulfide bond links Cys42 and Cys107. A complementarity-determining-1 region spans residues 43–53; sequence RASQSIGSSLH. The interval 54 to 68 is framework-2; sequence WYQQKPDQSPKLLIK. The segment at 69-75 is complementarity-determining-2; it reads YASQSIS. A framework-3 region spans residues 76 to 107; that stretch reads GVPSRFSGSGSGTDFTLTINSLEAEDAAAYYC. Residues 108–114 form a complementarity-determining-3 region; the sequence is HQSSSLP.

Immunoglobulins are composed of two identical heavy chains and two identical light chains; disulfide-linked.

The protein resides in the secreted. Its subcellular location is the cell membrane. In terms of biological role, v region of the variable domain of immunoglobulin light chains that participates in the antigen recognition. Immunoglobulins, also known as antibodies, are membrane-bound or secreted glycoproteins produced by B lymphocytes. In the recognition phase of humoral immunity, the membrane-bound immunoglobulins serve as receptors which, upon binding of a specific antigen, trigger the clonal expansion and differentiation of B lymphocytes into immunoglobulins-secreting plasma cells. Secreted immunoglobulins mediate the effector phase of humoral immunity, which results in the elimination of bound antigens. The antigen binding site is formed by the variable domain of one heavy chain, together with that of its associated light chain. Thus, each immunoglobulin has two antigen binding sites with remarkable affinity for a particular antigen. The variable domains are assembled by a process called V-(D)-J rearrangement and can then be subjected to somatic hypermutations which, after exposure to antigen and selection, allow affinity maturation for a particular antigen. The polypeptide is Immunoglobulin kappa variable 6D-21 (Homo sapiens (Human)).